Here is a 255-residue protein sequence, read N- to C-terminus: Imidazole glycerol phosphate synthase subunit HisF (255 aa).

Active-site residues include Asp11 and Asp130.

It belongs to the HisA/HisF family. Heterodimer of HisH and HisF.

It localises to the cytoplasm. It catalyses the reaction 5-[(5-phospho-1-deoxy-D-ribulos-1-ylimino)methylamino]-1-(5-phospho-beta-D-ribosyl)imidazole-4-carboxamide + L-glutamine = D-erythro-1-(imidazol-4-yl)glycerol 3-phosphate + 5-amino-1-(5-phospho-beta-D-ribosyl)imidazole-4-carboxamide + L-glutamate + H(+). It participates in amino-acid biosynthesis; L-histidine biosynthesis; L-histidine from 5-phospho-alpha-D-ribose 1-diphosphate: step 5/9. Functionally, IGPS catalyzes the conversion of PRFAR and glutamine to IGP, AICAR and glutamate. The HisF subunit catalyzes the cyclization activity that produces IGP and AICAR from PRFAR using the ammonia provided by the HisH subunit. The chain is Imidazole glycerol phosphate synthase subunit HisF from Rhodopseudomonas palustris (strain BisA53).